A 74-amino-acid polypeptide reads, in one-letter code: Ubiquitin-like protein FUBI (74 aa).

It belongs to the ubiquitin family.

The protein is Ubiquitin-like protein FUBI (FAU) of Pongo abelii (Sumatran orangutan).